The sequence spans 598 residues: Membrane protein insertase YidC (598 aa).

Residues 7 to 27 traverse the membrane as a helical segment; the sequence is NYFIAIALSVLIVLGWQFLYM. A disordered region spans residues 37–71; sequence AQEAQKAQQQTEQVQQPAAGGATPAPASGTAPSGQ. Positions 40-71 are enriched in low complexity; the sequence is AQKAQQQTEQVQQPAAGGATPAPASGTAPSGQ. 4 helical membrane passes run 373 to 393, 447 to 467, 492 to 512, and 538 to 558; these read FFGNFGVAILCTTIVVKALFF, WPVALQIPIFFSLYKVIYITI, LFGLLPFTAPTFLHLGVWPLI, and WMPLVFMFMLASFPAGLVIYW.

Belongs to the OXA1/ALB3/YidC family. Type 1 subfamily. As to quaternary structure, interacts with the Sec translocase complex via SecD. Specifically interacts with transmembrane segments of nascent integral membrane proteins during membrane integration.

The protein localises to the cell inner membrane. Its function is as follows. Required for the insertion and/or proper folding and/or complex formation of integral membrane proteins into the membrane. Involved in integration of membrane proteins that insert both dependently and independently of the Sec translocase complex, as well as at least some lipoproteins. Aids folding of multispanning membrane proteins. This is Membrane protein insertase YidC from Rhizobium etli (strain CIAT 652).